Consider the following 1521-residue polypeptide: MSYRKGLKVWVEEKGEGWVEAEVVEAKERAVVVFSSQRKKITVSPEKLLPRDTDEDLGGGHVDDMTKLTYLNEPGVLYNLKKRYALNEIYTYTGSILIAVNPFTRLPHLYNEYMMEQYKGIRLGELSPHVFAVADASYSRAMVNDSRSQSILVSGESGAGKTETTKLIMQYLTFVGGRAALDDRTVEQQVLESNPLLEAFGNAKTVRNDNSSRFGKFVEIQFDSSGRISGAAIRTYLLERSRVVQITDPERNFHCFYQLCASGKDAELYKLGHISSFHYLNQSNTHDLEGTNNEDEYWKTKRAMDIVGISREDQDAIFRTLAAILHLGNIEFVPGKDADSSKIKDSTSNFHLQTAAKLFMCDSDLLVSTLCSRSIHTREGIIVKALDCAAAAANRDALAKTVYARLFDWLVENINKSIGQDVDSKLQIGVLDIYGFESFKNNSFEQFCINFANEKLQQHFNEHVFKMEQEEYKSEEINWSYIEFIDNQDVLDLIEKKPIGIIALLDEACMFPKSTHETFATKMFRNFSSHLRLERTKFSETDFTISHYAGKVTYQTDSFLEKNRDYIVAEHCNLLSSSRCPFVSGLFTSLPEESIRSSYKFSSVASRFKLQLQALMETLNSTEPHYVRCVKPNSANRPQLFENQSVLHQLRCGGVLEAVRISLAGYPTRRTYAEFVDRFAVLVPELMIGSYDEKMMTKGILEKMKLENFQLGKTKVFLRAGQIAILDMRRAEILDNAARHIQGRFRTFITRKEFVKTREASISIQAYCRGCLARKMFANRRETAAAVIVQKYVRRWLLRRAHLQACLAALLIQSYIRGFIARRYFSVIREHKAATVIQSTWRRRKFVILFQNYRQATVAIQCSWRQKLARKELRKLKMAANEAGALREAKNKLEKKMDDLALRLTLERRLRASSEESKSVEILKRDKIIESLSAECAAAKSAAQNEHAKKLLLQKQLDDSLREITMLQSKKIMSAEAAEENSNLKNLVESLSTKNSILENELIVTRKSSDDTMEKLKEVEGKCNHLQQNLDKLQEKLTNLENENHVLRQKAFNMPTMNNLSVAPKTLSEKFSASIGLPNSEPKHIYESPTPTKYLASLPQTLSTSRRSRLPVERHEQNHEILLRCIKENLGYKDGKPVAACIIYKCLLHWRAFESERTAIFDHVIEAINDVLKGNEADGRLPYWLSNTSALLCLLQRNLRSNGLFTTPSRRSGGALGKIAQTLRSPSKFIGRSDTLPHVDARYPAILFKQQLTACVEKIFGQLRDNLKKEISPLLNVCIQAPKSTRGQSGKASKSSGVGAHPASNSNWDNIVNFLDLLMDTLRENYVPSFFIRKLITQLFSFINIQLFNSLLLRRECCTFSNGEYVKAGLSLLEKWITDVTDEFAGTSWHELNYIRQAVGFLVIHQKRKKTLEEIKQDLCPSLSVRQIYRICSMYWDDKYGTQGISTEVVAAMREMVNKDTQNLVSNSFLLDDDLSIPFSTEDLSMAIPSIDYADVDLPESLQHYTSVQFLLRQQDPQPAQ.

The region spanning 4-53 (RKGLKVWVEEKGEGWVEAEVVEAKERAVVVFSSQRKKITVSPEKLLPRDT) is the Myosin N-terminal SH3-like domain. A Myosin motor domain is found at 60–731 (GHVDDMTKLT…QIAILDMRRA (672 aa)). ATP contacts are provided by residues 155 to 162 (GESGAGKT) and 208 to 216 (NDNSSRFGK). Actin-binding stretches follow at residues 493-527 (LIEK…FRNF), 529-552 (SHLR…AGKV), 587-612 (FTSL…KLQL), and 612-634 (LQAL…KPNS). IQ domains are found at residues 733–755 (ILDN…KEFV), 756–778 (KTRE…KMFA), 781–803 (RETA…RAHL), 804–826 (QACL…RYFS), 829–851 (REHK…ILFQ), and 852–874 (NYRQ…KELR). 2 coiled-coil regions span residues 870-910 (RKEL…ERRL) and 974-1050 (SAEA…LRQK). One can recognise a Dilute domain in the interval 1162–1459 (DHVIEAINDV…VAAMREMVNK (298 aa)).

Belongs to the TRAFAC class myosin-kinesin ATPase superfamily. Myosin family. Plant myosin class XI subfamily. As to quaternary structure, interacts (via C-terminus) with HIP (via C-terminus), but not with zeins, FL1 or intrinsic proteins of protein bodies. High expression in kernels and stems, intermediate in ears and leaves, and low in roots, silks and tassels.

The protein resides in the cytoplasm. Myosin XI motor protein required for endoplasmic reticulum motility and protein body formation. May function by binding with its tail domain to receptor proteins on membranes and exerting force with its N-terminal motor domain against actin filaments, thereby transporting its cargo along polarized actin cables. This chain is Protein OPAQUE1, found in Zea mays (Maize).